Reading from the N-terminus, the 442-residue chain is Histidinol dehydrogenase (442 aa).

The NAD(+) site is built by Tyr136, Gln197, and Asn220. Substrate-binding residues include Ser243, Gln265, and His268. Positions 265 and 268 each coordinate Zn(2+). Catalysis depends on proton acceptor residues Glu333 and His334. His334, Asp367, Glu421, and His426 together coordinate substrate. Asp367 contacts Zn(2+). Residue His426 coordinates Zn(2+).

Belongs to the histidinol dehydrogenase family. Zn(2+) serves as cofactor.

The enzyme catalyses L-histidinol + 2 NAD(+) + H2O = L-histidine + 2 NADH + 3 H(+). The protein operates within amino-acid biosynthesis; L-histidine biosynthesis; L-histidine from 5-phospho-alpha-D-ribose 1-diphosphate: step 9/9. Functionally, catalyzes the sequential NAD-dependent oxidations of L-histidinol to L-histidinaldehyde and then to L-histidine. In Pseudomonas fluorescens (strain ATCC BAA-477 / NRRL B-23932 / Pf-5), this protein is Histidinol dehydrogenase.